A 131-amino-acid chain; its full sequence is Peptide methionine sulfoxide reductase MsrB (131 aa).

The MsrB domain maps to 8 to 130 (LEEWKEMLDP…NSVCLDLVPR (123 aa)). Zn(2+) is bound by residues cysteine 47, cysteine 50, cysteine 96, and cysteine 99. Cysteine 119 (nucleophile) is an active-site residue.

The protein belongs to the MsrB Met sulfoxide reductase family. The cofactor is Zn(2+).

It catalyses the reaction L-methionyl-[protein] + [thioredoxin]-disulfide + H2O = L-methionyl-(R)-S-oxide-[protein] + [thioredoxin]-dithiol. This Pseudomonas savastanoi pv. phaseolicola (strain 1448A / Race 6) (Pseudomonas syringae pv. phaseolicola (strain 1448A / Race 6)) protein is Peptide methionine sulfoxide reductase MsrB.